Consider the following 246-residue polypeptide: Exosome complex component Rrp41 (246 aa).

It belongs to the RNase PH family. Rrp41 subfamily. In terms of assembly, component of the archaeal exosome complex. Forms a hexameric ring-like arrangement composed of 3 Rrp41-Rrp42 heterodimers. The hexameric ring associates with a trimer of Rrp4 and/or Csl4 subunits.

It localises to the cytoplasm. Its function is as follows. Catalytic component of the exosome, which is a complex involved in RNA degradation. Has 3'-&gt;5' exoribonuclease activity. Can also synthesize heteromeric RNA-tails. The sequence is that of Exosome complex component Rrp41 from Pyrobaculum neutrophilum (strain DSM 2338 / JCM 9278 / NBRC 100436 / V24Sta) (Thermoproteus neutrophilus).